Here is a 198-residue protein sequence, read N- to C-terminus: Lipid A 4'-phosphatase (198 aa).

The helical transmembrane segment at Ala-143–Phe-165 threads the bilayer.

The protein belongs to the lipid A LpxF 4'-phosphatase family.

The protein resides in the cell inner membrane. It functions in the pathway bacterial outer membrane biogenesis; LPS lipid A biosynthesis. Removes the 4'-phosphate group from tetra- and hexaacylated lipid A species, has no 1-phosphatase or Kdo hydrolase activity. Absence of the 4'-phosphate group renders the bacteria resistant to host-derived cationic antimicrobial peptides (CAMP), allowing it to camouflage itself from the host innate immune response, and plays a critical role in the long-term colonization of the host's stomach. The polypeptide is Lipid A 4'-phosphatase (Helicobacter pylori (strain J99 / ATCC 700824) (Campylobacter pylori J99)).